We begin with the raw amino-acid sequence, 155 residues long: Large ribosomal subunit protein uL30 (155 aa).

Belongs to the universal ribosomal protein uL30 family. In terms of assembly, part of the 50S ribosomal subunit.

The polypeptide is Large ribosomal subunit protein uL30 (Pyrococcus abyssi (strain GE5 / Orsay)).